Consider the following 414-residue polypeptide: Eukaryotic initiation factor 4A-1 (414 aa).

The Q motif signature appears at 41–69; it reads ESFDDMGLQENLLRGIYAYGFEKPSAIQQ. Positions 72 to 242 constitute a Helicase ATP-binding domain; that stretch reads IVPFCKGLDV…RKFMNKPVRI (171 aa). An ATP-binding site is contributed by 85 to 92; it reads AQSGTGKT. The short motif at 190-193 is the DEAD box element; the sequence is DEAD. The Helicase C-terminal domain maps to 253-414; it reads GIKQFYVNVE…ELPANVADLL (162 aa).

Belongs to the DEAD box helicase family. eIF4A subfamily. As to quaternary structure, eIF4F is a multi-subunit complex, the composition of which varies with external and internal environmental conditions. It is composed of at least EIF4A, EIF4E and EIF4G.

The catalysed reaction is ATP + H2O = ADP + phosphate + H(+). Its function is as follows. ATP-dependent RNA helicase which is a subunit of the eIF4F complex involved in cap recognition and is required for mRNA binding to ribosome. In the current model of translation initiation, eIF4A unwinds RNA secondary structures in the 5'-UTR of mRNAs which is necessary to allow efficient binding of the small ribosomal subunit, and subsequent scanning for the initiator codon. The polypeptide is Eukaryotic initiation factor 4A-1 (Oryza sativa subsp. japonica (Rice)).